The primary structure comprises 262 residues: Ribosomal RNA small subunit methyltransferase A (262 aa).

His16, Leu18, Gly43, Glu64, Asp89, and Asn109 together coordinate S-adenosyl-L-methionine.

The protein belongs to the class I-like SAM-binding methyltransferase superfamily. rRNA adenine N(6)-methyltransferase family. RsmA subfamily.

It is found in the cytoplasm. The enzyme catalyses adenosine(1518)/adenosine(1519) in 16S rRNA + 4 S-adenosyl-L-methionine = N(6)-dimethyladenosine(1518)/N(6)-dimethyladenosine(1519) in 16S rRNA + 4 S-adenosyl-L-homocysteine + 4 H(+). Specifically dimethylates two adjacent adenosines (A1518 and A1519) in the loop of a conserved hairpin near the 3'-end of 16S rRNA in the 30S particle. May play a critical role in biogenesis of 30S subunits. The chain is Ribosomal RNA small subunit methyltransferase A from Xanthomonas axonopodis pv. citri (strain 306).